The following is a 506-amino-acid chain: MDTILRLSHITKSFPGVKALSDIHLEIVRGEIHALLGENGAGKSTLMKILCGIHQPDAGTIEIDGTARHFTSYHDAVAAGVGIVFQEFSLIPHLDAVDNLFLGRELRTRWGVRDRARMRRAAAGIFARLGVSIDLDAPLRTLSVAQQQFVEIGKALSLDARILILDEPTATLTPAEAEHLFAIMRELKRQGVAMIFISHHLDEIFAVCDRITVLRDGQYVATTDVSSTDVEQLVRMMVGRRLESSFPPKPVRAADAPAVLEVDALQIERDGPVNRFALHAGEILGFAGLVGSGRTETALAVIGATRAHRKTVRVRGTPAKLADPADALRAGIGLLPESRKTEGLVTSFSIRDNISLNNLGKYRSMRWLIDRRGEARTTHDVMRRVGVKAPSIHTEVATLSGGNQQKVVIARWLNHHASVLIFDEPTRGIDVGAKAEIYGLMRELTARGYAIIMISSELPEIVGMCDRVAVFRQGRIEATLEGDEIDPDTVMTHATAGTRGATHEPA.

ABC transporter domains are found at residues 5–241 (LRLS…VGRR) and 251–498 (VRAA…TAGT). 37-44 (GENGAGKS) lines the ATP pocket.

The protein belongs to the ABC transporter superfamily. Ribose importer (TC 3.A.1.2.1) family. As to quaternary structure, the complex is composed of an ATP-binding protein (RbsA), two transmembrane proteins (RbsC) and a solute-binding protein (RbsB).

The protein resides in the cell inner membrane. It carries out the reaction D-ribose(out) + ATP + H2O = D-ribose(in) + ADP + phosphate + H(+). Part of the ABC transporter complex RbsABC involved in ribose import. Responsible for energy coupling to the transport system. The sequence is that of Ribose import ATP-binding protein RbsA 2 from Burkholderia ambifaria (strain ATCC BAA-244 / DSM 16087 / CCUG 44356 / LMG 19182 / AMMD) (Burkholderia cepacia (strain AMMD)).